The primary structure comprises 123 residues: Snaclec GPIB-binding protein subunit beta (123 aa).

Intrachain disulfides connect cysteine 2/cysteine 13, cysteine 30/cysteine 119, and cysteine 96/cysteine 111. The 112-residue stretch at 9-120 folds into the C-type lectin domain; sequence YGGHCYKLFK…CTRLQYFVCE (112 aa).

The protein belongs to the snaclec family. In terms of assembly, heterodimer of subunits alpha and beta; disulfide-linked. Expressed by the venom gland.

The protein localises to the secreted. Functionally, binds to platelet GPIb (subunit alpha) (GP1BA) and functions as a receptor blocker for vWF binding to GPIb. The platelet GPIb-binding site resides on the GPIB-BP subunit beta and not on the alpha subunit. At a final concentration of 104 nM totally abolishes vWF-dependent shear-induced platelet aggregation (SIPA) at a high shear stress, but had no effect on SIPA at a low shear stress. This Bothrops jararaca (Jararaca) protein is Snaclec GPIB-binding protein subunit beta.